Consider the following 264-residue polypeptide: 3-methyl-2-oxobutanoate hydroxymethyltransferase 1 (264 aa).

The Mg(2+) site is built by D45 and D84. Residues 45–46 (DS), D84, and K112 each bind 3-methyl-2-oxobutanoate. Position 114 (E114) interacts with Mg(2+). E181 (proton acceptor) is an active-site residue.

It belongs to the PanB family. In terms of assembly, homodecamer; pentamer of dimers. It depends on Mg(2+) as a cofactor.

It is found in the cytoplasm. The catalysed reaction is 3-methyl-2-oxobutanoate + (6R)-5,10-methylene-5,6,7,8-tetrahydrofolate + H2O = 2-dehydropantoate + (6S)-5,6,7,8-tetrahydrofolate. Its pathway is cofactor biosynthesis; (R)-pantothenate biosynthesis; (R)-pantoate from 3-methyl-2-oxobutanoate: step 1/2. Its function is as follows. Catalyzes the reversible reaction in which hydroxymethyl group from 5,10-methylenetetrahydrofolate is transferred onto alpha-ketoisovalerate to form ketopantoate. The protein is 3-methyl-2-oxobutanoate hydroxymethyltransferase 1 of Aliivibrio fischeri (strain ATCC 700601 / ES114) (Vibrio fischeri).